The following is a 498-amino-acid chain: ATP synthase subunit beta, chloroplastic (498 aa).

172–179 (GGAGVGKT) lines the ATP pocket.

It belongs to the ATPase alpha/beta chains family. F-type ATPases have 2 components, CF(1) - the catalytic core - and CF(0) - the membrane proton channel. CF(1) has five subunits: alpha(3), beta(3), gamma(1), delta(1), epsilon(1). CF(0) has four main subunits: a(1), b(1), b'(1) and c(9-12).

The protein localises to the plastid. It is found in the chloroplast thylakoid membrane. It catalyses the reaction ATP + H2O + 4 H(+)(in) = ADP + phosphate + 5 H(+)(out). Functionally, produces ATP from ADP in the presence of a proton gradient across the membrane. The catalytic sites are hosted primarily by the beta subunits. This is ATP synthase subunit beta, chloroplastic from Nicotiana sylvestris (Wood tobacco).